The following is a 968-amino-acid chain: MPFTLGQRWISDTESELGLGTVVAVDARTVTLLFPSTGENRLYARSDSPVTRVMFNPGDTITSHDGWQMQVEEVKEENGLLTYIGTRLDTEESGVALREVFLDSKLVFSKPQDRLFAGQIDRMDRFALRYRARKYSSEQFRMPYSGLRGQRTSLIPHQLNIAHDVGRRHAPRVLLADEVGLGKTIEAGMILHQQLLSGAAERVLIIVPETLQHQWLVEMLRRFNLRFALFDDERYAEAQHDAYNPFDTEQLVICSLDFARRSKQRLEHLCEAEWDLLVVDEAHHLVWSEDAPSREYQAIEQLAEHVPGVLLLTATPEQLGMESHFARLRLLDPNRFHDFAQFVEEQKNYRPVADAVAMLLAGNKLSNDELNMLGEMIGEQDIEPLLQAANSNSEDAQSARQELVSMLMDRHGTSRVLFRNTRNGVKGFPKRELHTIKLPLPTQYQTAIKVSGIMGARKSAEDRARDMLYPERIYQEFEGDNATWWNFDPRVEWLMGYLTSHRSQKVLVICAKAATALQLEQVLREREGIRAAVFHEGMSIIERDRAAAWFAEEDTGAQVLLCSEIGSEGRNFQFASHMVMFDLPFNPDLLEQRIGRLDRIGQAHDIQIHVPYLEKTAQSVLVRWYHEGLDAFEHTCPTGRTIYDSVYNDLINYLASPDQTEGFDDLIKNCREQHEALKAQLEQGRDRLLEIHSNGGEKAQALAESIEEQDDDTNLIAFAMNLFDIIGINQDDRGDNMIVLTPSDHMLVPDFPGLSEDGITITFDREVALAREDAQFITWEHPLIRNGLDLILSGDTGSSTISLLKNKALPVGTLLVELIYVVEAQAPKQLQLNRFLPPTPVRMLLDKNGNNLAAQVEFETFNRQLNAVNRHTGSKLVNAVQQDVHAILQLGEAQIEKSARALIDAARNEADEKLSAELSRLEALRAVNPNIRDDELTAIESNRQQVMESLDQAGWRLDALRLIVVTHQ.

A Helicase ATP-binding domain is found at 164–334 (DVGRRHAPRV…FARLRLLDPN (171 aa)). 177 to 184 (DEVGLGKT) is a binding site for ATP. The short motif at 280-283 (DEAH) is the DEAH box element. In terms of domain architecture, Helicase C-terminal spans 490–662 (RVEWLMGYLT…YLASPDQTEG (173 aa)).

This sequence belongs to the SNF2/RAD54 helicase family. RapA subfamily. As to quaternary structure, interacts with the RNAP. Has a higher affinity for the core RNAP than for the holoenzyme. Its ATPase activity is stimulated by binding to RNAP.

Functionally, transcription regulator that activates transcription by stimulating RNA polymerase (RNAP) recycling in case of stress conditions such as supercoiled DNA or high salt concentrations. Probably acts by releasing the RNAP, when it is trapped or immobilized on tightly supercoiled DNA. Does not activate transcription on linear DNA. Probably not involved in DNA repair. The chain is RNA polymerase-associated protein RapA from Escherichia fergusonii (strain ATCC 35469 / DSM 13698 / CCUG 18766 / IAM 14443 / JCM 21226 / LMG 7866 / NBRC 102419 / NCTC 12128 / CDC 0568-73).